We begin with the raw amino-acid sequence, 57 residues long: uncharacterized protein (57 aa).

The interval His-31–Phe-57 is disordered. Positions Gln-33–Phe-57 are enriched in polar residues.

This is an uncharacterized protein from Invertebrate iridescent virus 6 (IIV-6).